The following is a 607-amino-acid chain: UvrABC system protein C (607 aa).

The GIY-YIG domain maps to 16-94 (GRPGVYRMFD…IKEWRPPYNI (79 aa)). The region spanning 203–238 (NALTDELSTAMEAAASTLDFEKAAELRDQISLLRRV) is the UVR domain.

The protein belongs to the UvrC family. In terms of assembly, interacts with UvrB in an incision complex.

It is found in the cytoplasm. Its function is as follows. The UvrABC repair system catalyzes the recognition and processing of DNA lesions. UvrC both incises the 5' and 3' sides of the lesion. The N-terminal half is responsible for the 3' incision and the C-terminal half is responsible for the 5' incision. The polypeptide is UvrABC system protein C (Pseudomonas fluorescens (strain ATCC BAA-477 / NRRL B-23932 / Pf-5)).